The chain runs to 228 residues: Sodium channel regulatory subunit beta-4 (228 aa).

Residues 1-30 form the signal peptide; sequence MPGARDQGAARARWLGIGLLGLFLLPVSLS. One can recognise an Ig-like C2-type domain in the interval 31 to 148; sequence LEVSVGKATT…NDFQHQATIF (118 aa). Residues 31-162 are Extracellular-facing; it reads LEVSVGKATT…DKLEEVDNTV (132 aa). N-linked (GlcNAc...) asparagine glycosylation is found at Asn45, Asn71, and Asn113. Cys53 and Cys131 are oxidised to a cystine. Residues 163–183 traverse the membrane as a helical segment; it reads TLIILGVVGGVIGLLIFILLV. At 184–228 the chain is on the cytoplasmic side; that stretch reads KKFIAFIIKKTQEKKKECLVSSSGNDNTENGLPGSKAEEKAPTKV. Residues 198-228 are disordered; the sequence is KKECLVSSSGNDNTENGLPGSKAEEKAPTKV. Over residues 203–213 the composition is skewed to polar residues; that stretch reads VSSSGNDNTEN. A compositionally biased stretch (basic and acidic residues) spans 219–228; the sequence is KAEEKAPTKV.

This sequence belongs to the sodium channel auxiliary subunit SCN4B (TC 8.A.17) family. A voltage-gated sodium (Nav) channel consists of an ion-conducting pore-forming alpha subunit functional on its own that is regulated by one or more beta subunits. The beta subunit SCN4B is disulfide-linked to the pore-forming alpha subunit. Interacts with SCN1A; regulatory subunit of SCN1A/Nav1.1. Interacts with SCN2A; regulatory subunit of SCN2A/Nav1.2. Post-translationally, contains an interchain disulfide bond with SCN2A.

It localises to the cell membrane. Functionally, regulatory subunit of multiple voltage-gated sodium (Nav) channels directly mediating the depolarization of excitable membranes. Navs, also called VGSCs (voltage-gated sodium channels) or VDSCs (voltage-dependent sodium channels), operate by switching between closed and open conformations depending on the voltage difference across the membrane. In the open conformation they allow Na(+) ions to selectively pass through the pore, along their electrochemical gradient. The influx of Na+ ions provokes membrane depolarization, initiating the propagation of electrical signals throughout cells and tissues. The accessory beta subunits participate in localization and functional modulation of the Nav channels. Modulates the activity of SCN1A/Nav1.1. Modulates the activity of SCN2A/Nav1.2. This Bos taurus (Bovine) protein is Sodium channel regulatory subunit beta-4.